Reading from the N-terminus, the 565-residue chain is Sulfite reductase [NADPH] hemoprotein beta-component (565 aa).

The [4Fe-4S] cluster site is built by Cys-429, Cys-435, Cys-474, and Cys-478. Cys-478 contributes to the siroheme binding site.

Belongs to the nitrite and sulfite reductase 4Fe-4S domain family. In terms of assembly, alpha(8)-beta(8). The alpha component is a flavoprotein, the beta component is a hemoprotein. Siroheme serves as cofactor. The cofactor is [4Fe-4S] cluster.

It catalyses the reaction hydrogen sulfide + 3 NADP(+) + 3 H2O = sulfite + 3 NADPH + 4 H(+). Its pathway is sulfur metabolism; hydrogen sulfide biosynthesis; hydrogen sulfide from sulfite (NADPH route): step 1/1. In terms of biological role, component of the sulfite reductase complex that catalyzes the 6-electron reduction of sulfite to sulfide. This is one of several activities required for the biosynthesis of L-cysteine from sulfate. The chain is Sulfite reductase [NADPH] hemoprotein beta-component from Shewanella halifaxensis (strain HAW-EB4).